Reading from the N-terminus, the 504-residue chain is Anaerobic nitric oxide reductase transcription regulator NorR (504 aa).

4-aspartylphosphate is present on aspartate 57. Residues 187-416 (MIGLSPGMTQ…LEHAIHRAVV (230 aa)) enclose the Sigma-54 factor interaction domain. ATP is bound by residues 215 to 222 (GETGTGKE) and 278 to 287 (ADNGTLFLDE). A DNA-binding region (H-T-H motif) is located at residues 479-498 (WAACARMLETDVANLHRLAK).

It participates in nitrogen metabolism; nitric oxide reduction. Functionally, required for the expression of anaerobic nitric oxide (NO) reductase, acts as a transcriptional activator for at least the norVW operon. Activation also requires sigma-54. This Escherichia coli O6:H1 (strain CFT073 / ATCC 700928 / UPEC) protein is Anaerobic nitric oxide reductase transcription regulator NorR.